We begin with the raw amino-acid sequence, 350 residues long: Pleckstrin (350 aa).

The PH 1 domain maps to 4–101 (KRIREGYLVK…WVRDIKKAIK (98 aa)). K64 carries the N6-acetyllysine modification. Phosphoserine occurs at positions 113 and 117. Residues 136–221 (PEKGIKELNL…NPDAFYYFPD (86 aa)) enclose the DEP domain. A PH 2 domain is found at 244 to 347 (IIIKQGCLLK…WIKAIQVASR (104 aa)).

Major protein kinase C substrate of platelets. This is Pleckstrin (Plek) from Rattus norvegicus (Rat).